The following is a 417-amino-acid chain: GTP-binding protein YPT11 (417 aa).

Positions 1–34 (MSQRKRYSLNVVTSPSIPSPTPSAPIRTNESNWE) are disordered. GTP is bound by residues 97–104 (GDANVGKT), 228–232 (DTAGQ), and 292–295 (NKID). Residues cysteine 415 and cysteine 416 are each lipidated (S-geranylgeranyl cysteine).

It belongs to the small GTPase superfamily. Rab family. As to quaternary structure, interacts with MYO2 (via C-terminal tail domain). Interacts with YIF1, YIP3, YIP4 and YIP5.

It localises to the endoplasmic reticulum membrane. The protein localises to the bud tip. It is found in the bud neck. Functionally, involved in the positive control of both endoplasmic reticulum (ER) and mitochondrion inheritance during cell divison. Required for the MYO2-dependent retention of newly inherited mitochondria at the bud tip in developing daughter cells. This is GTP-binding protein YPT11 (YPT11) from Saccharomyces cerevisiae (strain YJM789) (Baker's yeast).